A 645-amino-acid chain; its full sequence is Cytochrome c oxidase subunit 1 (645 aa).

A helical transmembrane segment spans residues 8-28 (LNYFYFSMWTGLSGAALATMI). 2 residues coordinate Ca(2+): Glu31 and Gly36. His54 lines the Fe(II)-heme a pocket. 8 helical membrane-spanning segments follow: residues 56 to 76 (LIMVFFVVVPIFFGGFANFLI), 90 to 110 (LNSIGFWIQPLGFLLVAKIAF), 247 to 267 (VLSVAVVLAGISTTISLLTLI), 282 to 302 (VLIPFITISLLLTLRLLAIVT), 337 to 357 (LFWFFGHPEVYILIIPSFGVA), 376 to 396 (IWAVYVMAYMGFVVWGHHMYL), 410 to 430 (ITIMICLPATIKLVNWTLTLA), and 438 to 458 (LVFLFFCSYVFFFLTGGFTGM). His343 is a binding site for Cu cation. Residues 343–347 (HPEVY) constitute a cross-link (1'-histidyl-3'-tyrosine (His-Tyr)). Tyr347 serves as a coordination point for O2. The Cu cation site is built by His392 and His393. Mg(2+) contacts are provided by His470 and Asp471. 3 helical membrane passes run 475-495 (VVAHFHLMLAGAAMMGAFTGL), 513-533 (FLHLVYYSAGIWTTFFPMFFL), and 555-575 (LASCGHFLTLAGVCFFFFGIF). His478 lines the heme a3 pocket. His480 is a binding site for Fe(II)-heme a.

Belongs to the heme-copper respiratory oxidase family. In terms of assembly, component of the cytochrome c oxidase (complex IV, CIV), a multisubunit enzyme composed of a catalytic core of 3 subunits and several supernumerary subunits. The complex exists as a monomer or a dimer and forms supercomplexes (SCs) in the inner mitochondrial membrane with ubiquinol-cytochrome c oxidoreductase (cytochrome b-c1 complex, complex III, CIII). Requires heme as cofactor. The cofactor is Cu cation.

The protein localises to the mitochondrion inner membrane. The enzyme catalyses 4 Fe(II)-[cytochrome c] + O2 + 8 H(+)(in) = 4 Fe(III)-[cytochrome c] + 2 H2O + 4 H(+)(out). The protein operates within energy metabolism; oxidative phosphorylation. In terms of biological role, component of the cytochrome c oxidase, the last enzyme in the mitochondrial electron transport chain which drives oxidative phosphorylation. The respiratory chain contains 3 multisubunit complexes succinate dehydrogenase (complex II, CII), ubiquinol-cytochrome c oxidoreductase (cytochrome b-c1 complex, complex III, CIII) and cytochrome c oxidase (complex IV, CIV), that cooperate to transfer electrons derived from NADH and succinate to molecular oxygen, creating an electrochemical gradient over the inner membrane that drives transmembrane transport and the ATP synthase. Cytochrome c oxidase is the component of the respiratory chain that catalyzes the reduction of oxygen to water. Electrons originating from reduced cytochrome c in the intermembrane space (IMS) are transferred via the dinuclear copper A center (CU(A)) of subunit 2 and heme A of subunit 1 to the active site in subunit 1, a binuclear center (BNC) formed by heme A3 and copper B (CU(B)). The BNC reduces molecular oxygen to 2 water molecules using 4 electrons from cytochrome c in the IMS and 4 protons from the mitochondrial matrix. In Paramecium tetraurelia, this protein is Cytochrome c oxidase subunit 1 (COI).